Reading from the N-terminus, the 323-residue chain is PTS system mannose-specific EIIAB component (323 aa).

Positions 2 to 124 (TIAIVIGTHG…VALAVETGRE (123 aa)) constitute a PTS EIIA type-4 domain. The Tele-phosphohistidine intermediate; for EIIA activity role is filled by His10. Residue His10 is modified to Phosphohistidine; by HPr. Lys55 is subject to N6-acetyllysine. The hinge stretch occupies residues 137–155 (AAPAPAAAAPKAAPTPAKP). Positions 157 to 320 (GPNDYMVIGL…KLKMMDLISK (164 aa)) constitute a PTS EIIB type-4 domain. The Pros-phosphohistidine intermediate; for EIIB activity role is filled by His175. His175 is subject to Phosphohistidine; by EIIA. Lys234 carries the post-translational modification N6-acetyllysine.

In terms of assembly, homodimer.

Its subcellular location is the cytoplasm. It is found in the cell inner membrane. It catalyses the reaction D-mannose(out) + N(pros)-phospho-L-histidyl-[protein] = D-mannose 6-phosphate(in) + L-histidyl-[protein]. The phosphoenolpyruvate-dependent sugar phosphotransferase system (sugar PTS), a major carbohydrate active transport system, catalyzes the phosphorylation of incoming sugar substrates concomitantly with their translocation across the cell membrane. The enzyme II ManXYZ PTS system is involved in mannose transport. In Escherichia coli O157:H7, this protein is PTS system mannose-specific EIIAB component (manX).